The following is a 122-amino-acid chain: Ribosomal protein eL22-like (122 aa).

A phosphoserine mark is found at S112, S118, and S120.

It belongs to the eukaryotic ribosomal protein eL22 family.

This Bos taurus (Bovine) protein is Ribosomal protein eL22-like (RPL22L1).